A 352-amino-acid polypeptide reads, in one-letter code: uncharacterized protein (352 aa).

It to Synechocystis PCC 6803 slr0039.

This is an uncharacterized protein from Archaeoglobus fulgidus (strain ATCC 49558 / DSM 4304 / JCM 9628 / NBRC 100126 / VC-16).